The following is a 1135-amino-acid chain: APC membrane recruitment protein 1 (1135 aa).

Met1 is modified (N-acetylmethionine). Disordered stretches follow at residues 1–115 (METQ…EGTG), 156–308 (AEKF…VGDP), 339–405 (SMTD…EDDD), 447–484 (GLAP…DDSG), 736–764 (NFGG…KEGN), 921–948 (LQAQ…PLSL), and 1007–1135 (VPES…NLAK). Residues 10–19 (QAKGAAASGS) are compositionally biased toward low complexity. Positions 23–35 (QTAEKGAKNKAAE) are enriched in basic and acidic residues. Low complexity predominate over residues 36–50 (ATEGPTSEPSSSGPG). The segment covering 73 to 83 (FGGGRSKGSGK) has biased composition (gly residues). Basic and acidic residues-rich tracts occupy residues 94-107 (KTHD…HGPE) and 196-208 (GPER…HEHV). The segment covering 238–248 (KVSPTPEPSPP) has biased composition (pro residues). A Phosphoserine modification is found at Ser246. Basic and acidic residues-rich tracts occupy residues 253-262 (MACKDPEKPM) and 282-291 (EEPHSPETGE). The segment covering 373–405 (ALPDDDDEEEEEEEEVELEEEEEEVKEEEEDDD) has biased composition (acidic residues). Positions 455 to 466 (TPQSDQQESAPN) are enriched in polar residues. The segment covering 926 to 938 (EDSDEEDEEEEEG) has biased composition (acidic residues). A compositionally biased stretch (low complexity) spans 1058-1069 (PSCSSSSGGFSP). Positions 1119-1135 (SLATSYSSTAMNGNLAK) are enriched in polar residues.

The protein belongs to the Amer family. In terms of assembly, interacts with CTNNB1, AXIN1, LRP6, KEAP1, APC and BTRC. Interacts with SCF (SKP1-CUL1-F-box protein) E3 ubiquitin-protein ligase complexes containing BTRC and/or FBXW11. Identified in the beta-catenin destruction complex containing CTNNB1, APC, AXIN1 and AXIN2. Interacts with WT1. As to expression, detected in fetal and adult kidney, brain and spleen.

The protein resides in the cytoplasm. The protein localises to the cell membrane. It localises to the nucleus. In terms of biological role, regulator of the canonical Wnt signaling pathway. Acts by specifically binding phosphatidylinositol 4,5-bisphosphate (PtdIns(4,5)P2), translocating to the cell membrane and interacting with key regulators of the canonical Wnt signaling pathway, such as components of the beta-catenin destruction complex. Acts both as a positive and negative regulator of the Wnt signaling pathway, depending on the context: acts as a positive regulator by promoting LRP6 phosphorylation. Also acts as a negative regulator by acting as a scaffold protein for the beta-catenin destruction complex and promoting stabilization of Axin at the cell membrane. Promotes CTNNB1 ubiquitination and degradation. Involved in kidney development. The chain is APC membrane recruitment protein 1 (AMER1) from Homo sapiens (Human).